The primary structure comprises 491 residues: Aspartyl/glutamyl-tRNA(Asn/Gln) amidotransferase subunit B (491 aa).

The protein belongs to the GatB/GatE family. GatB subfamily. In terms of assembly, heterotrimer of A, B and C subunits.

The enzyme catalyses L-glutamyl-tRNA(Gln) + L-glutamine + ATP + H2O = L-glutaminyl-tRNA(Gln) + L-glutamate + ADP + phosphate + H(+). It carries out the reaction L-aspartyl-tRNA(Asn) + L-glutamine + ATP + H2O = L-asparaginyl-tRNA(Asn) + L-glutamate + ADP + phosphate + 2 H(+). Its function is as follows. Allows the formation of correctly charged Asn-tRNA(Asn) or Gln-tRNA(Gln) through the transamidation of misacylated Asp-tRNA(Asn) or Glu-tRNA(Gln) in organisms which lack either or both of asparaginyl-tRNA or glutaminyl-tRNA synthetases. The reaction takes place in the presence of glutamine and ATP through an activated phospho-Asp-tRNA(Asn) or phospho-Glu-tRNA(Gln). This chain is Aspartyl/glutamyl-tRNA(Asn/Gln) amidotransferase subunit B, found in Parasynechococcus marenigrum (strain WH8102).